The chain runs to 149 residues: Protein AE7-like 2 (149 aa).

Belongs to the MIP18 family.

In terms of biological role, may play a role in chromosome segregation through establishment of sister chromatid cohesion. Unable to complement ae7 mutants, and thus probably not involved in the cytosolic iron-sulfur assembly (CIA) pathway. In Arabidopsis thaliana (Mouse-ear cress), this protein is Protein AE7-like 2.